Here is a 174-residue protein sequence, read N- to C-terminus: Repair DNA polymerase X (174 aa).

The interval 42–51 is involved in ssDNA binding; the sequence is REEKMLNDVD. Residues D49 and D51 each contribute to the Mg(2+) site. A disulfide bridge links C81 with C86. A Mg(2+)-binding site is contributed by D100.

The protein belongs to the DNA polymerase type-X family. Mg(2+) is required as a cofactor.

It is found in the virion. It carries out the reaction DNA(n) + a 2'-deoxyribonucleoside 5'-triphosphate = DNA(n+1) + diphosphate. In terms of biological role, error-prone polymerase lacking a proofreading 3'-5' exonuclease which catalyzes the gap-filling reaction during the DNA repair process. Specifically binds intermediates in the single-nucleotide base-excision repair process. Also catalyzes DNA polymerization with low nucleotide-insertion fidelity. Probably acts as a strategic DNA mutase, which gives rise to a rapid emergence of variants. Generates mismatched G-G pairs, in that case, the polymerase first binds the deoxynucleotide followed by mismatch formation. Together with the viral DNA ligase, fills the single nucleotide gaps generated by the AP endonuclease. Binds DNA with high affinity via the helix alphaE. This chain is Repair DNA polymerase X, found in African swine fever virus (isolate Tick/Malawi/Lil 20-1/1983) (ASFV).